The primary structure comprises 361 residues: Tetraacyldisaccharide 4'-kinase (361 aa).

49 to 56 (TTGGTGKT) contributes to the ATP binding site.

It belongs to the LpxK family.

It catalyses the reaction a lipid A disaccharide + ATP = a lipid IVA + ADP + H(+). Its pathway is glycolipid biosynthesis; lipid IV(A) biosynthesis; lipid IV(A) from (3R)-3-hydroxytetradecanoyl-[acyl-carrier-protein] and UDP-N-acetyl-alpha-D-glucosamine: step 6/6. Functionally, transfers the gamma-phosphate of ATP to the 4'-position of a tetraacyldisaccharide 1-phosphate intermediate (termed DS-1-P) to form tetraacyldisaccharide 1,4'-bis-phosphate (lipid IVA). The polypeptide is Tetraacyldisaccharide 4'-kinase (Chlorobaculum parvum (strain DSM 263 / NCIMB 8327) (Chlorobium vibrioforme subsp. thiosulfatophilum)).